A 468-amino-acid chain; its full sequence is MGRRSGGRKLPFFASNASTSSSTKRTRSARRLPSLTRPRASSSPSPASPSPPPPSASHPAPPSPPLAVSPAGAGKVGKKKAGARLWMRLDRWGVSETLHLDKGSIIRRAGLPPRDLRILGPVFSDSSSILAREKAMVINLEFIRAIVTADEILLLDPLTIDVIPFVEQLTHHLPLKNLVCGNGQPGGDDHGEKHDDSPGDQVPRLNEATGAEHELPFEFQVLELALETVCSSFDVNVSGLERRATPVLEELTKNVSTRNLDRVRTLKSDLTRLLAHVQKVRDEIEHLLDDNEDMAHLYLTRKQLQNQQVEALISSAASNSIVPGGTSLSRLNNSFRRSVSIATSMHLDNDVEDLEMLLEAYFMQLDGIRNRILSVREYIDDTEDYVNIQLDNQRNELIQLQLTLTIASFGIAVNTFIAGAFAMNIQSKLYSIDDGSFFWPFVGGTSSGCFMICIVLLWYARWKKLLGP.

Disordered regions lie at residues 1 to 76 (MGRR…AGKV) and 182 to 205 (NGQP…VPRL). Low complexity-rich tracts occupy residues 14–23 (ASNASTSSST) and 31–45 (RLPS…SSPS). Positions 46 to 67 (PASPSPPPPSASHPAPPSPPLA) are enriched in pro residues. A compositionally biased stretch (basic and acidic residues) spans 187 to 197 (GDDHGEKHDDS). Transmembrane regions (helical) follow at residues 402-422 (LTLT…GAFA) and 437-457 (FFWP…IVLL).

The protein belongs to the CorA metal ion transporter (MIT) (TC 1.A.35.5) family.

The protein resides in the membrane. Putative magnesium transporter. The protein is Putative magnesium transporter MRS2-G (MRS2-G) of Oryza sativa subsp. indica (Rice).